We begin with the raw amino-acid sequence, 116 residues long: Large ribosomal subunit protein bL20c (116 aa).

Belongs to the bacterial ribosomal protein bL20 family.

Its subcellular location is the plastid. It is found in the chloroplast. In terms of biological role, binds directly to 23S ribosomal RNA and is necessary for the in vitro assembly process of the 50S ribosomal subunit. It is not involved in the protein synthesizing functions of that subunit. In Rhodomonas salina (Cryptomonas salina), this protein is Large ribosomal subunit protein bL20c.